Reading from the N-terminus, the 394-residue chain is Phosphoglycerate kinase (394 aa).

Residues 21–23, R36, 59–62, R118, and R151 contribute to the substrate site; these read DFN and HLGR. S183 is modified (phosphoserine). K201 provides a ligand contact to ATP. T299 bears the Phosphothreonine mark. Residues E323 and 350-353 contribute to the ATP site; that span reads GGDS.

Belongs to the phosphoglycerate kinase family. In terms of assembly, monomer.

Its subcellular location is the cytoplasm. The enzyme catalyses (2R)-3-phosphoglycerate + ATP = (2R)-3-phospho-glyceroyl phosphate + ADP. It participates in carbohydrate degradation; glycolysis; pyruvate from D-glyceraldehyde 3-phosphate: step 2/5. The sequence is that of Phosphoglycerate kinase from Geobacillus kaustophilus (strain HTA426).